The primary structure comprises 424 residues: Folate-like transporter 2 (424 aa).

Asn35 carries N-linked (GlcNAc...) asparagine glycosylation. 6 consecutive transmembrane segments (helical) span residues 48–68, 71–91, 99–119, 136–156, 164–184, and 233–253; these read IWTY…DVFL, PLLV…VFGK, LEVF…YIYV, ALLV…GLNW, IISL…PGVE, and PLIL…YQVT. Asn254 is a glycosylation site (N-linked (GlcNAc...) asparagine). A run of 4 helical transmembrane segments spans residues 299–319, 324–344, 361–381, and 392–412; these read WGDL…FWMS, IVVL…TTTI, LFGI…AVVI, and FVVY…IFGI.

It belongs to the reduced folate carrier (RFC) transporter (TC 2.A.48) family.

The protein resides in the membrane. Unlike folt-1, does not appear to act as a folate transporter. The sequence is that of Folate-like transporter 2 (folt-2) from Caenorhabditis elegans.